Here is a 115-residue protein sequence, read N- to C-terminus: Large ribosomal subunit protein bL19 (115 aa).

It belongs to the bacterial ribosomal protein bL19 family.

In terms of biological role, this protein is located at the 30S-50S ribosomal subunit interface and may play a role in the structure and function of the aminoacyl-tRNA binding site. This is Large ribosomal subunit protein bL19 from Nitratidesulfovibrio vulgaris (strain DSM 19637 / Miyazaki F) (Desulfovibrio vulgaris).